Consider the following 101-residue polypeptide: Apolipoprotein C-II (101 aa).

The N-terminal stretch at 1-22 is a signal peptide; the sequence is MGTRFLLALFLVLLVLGLEVQA. A lipid binding region spans residues 66-74; sequence AVDERIRDM. The segment at 78–101 is lipoprotein lipase cofactor; that stretch reads STAAVTTYAGIFTDQLFSMLKGEQ.

Belongs to the apolipoprotein C2 family. Post-translationally, proapolipoprotein C-II is synthesized as a sialic acid containing glycoprotein which is subsequently desialylated prior to its proteolytic processing. In terms of processing, proapolipoprotein C-II, the major form found in plasma undergoes proteolytic cleavage of its N-terminal hexapeptide to generate apolipoprotein C-II, which occurs as the minor form in plasma.

It localises to the secreted. Functionally, component of chylomicrons, very low-density lipoproteins (VLDL), low-density lipoproteins (LDL), and high-density lipoproteins (HDL) in plasma. Plays an important role in lipoprotein metabolism as an activator of lipoprotein lipase. Both proapolipoprotein C-II and apolipoprotein C-II can activate lipoprotein lipase. The chain is Apolipoprotein C-II (APOC2) from Tupaia glis (Common tree shrew).